A 179-amino-acid polypeptide reads, in one-letter code: Large ribosomal subunit protein uL5 (179 aa).

Belongs to the universal ribosomal protein uL5 family. In terms of assembly, part of the 50S ribosomal subunit; part of the 5S rRNA/L5/L18/L25 subcomplex. Contacts the 5S rRNA and the P site tRNA. Forms a bridge to the 30S subunit in the 70S ribosome.

Functionally, this is one of the proteins that bind and probably mediate the attachment of the 5S RNA into the large ribosomal subunit, where it forms part of the central protuberance. In the 70S ribosome it contacts protein S13 of the 30S subunit (bridge B1b), connecting the 2 subunits; this bridge is implicated in subunit movement. Contacts the P site tRNA; the 5S rRNA and some of its associated proteins might help stabilize positioning of ribosome-bound tRNAs. In Vesicomyosocius okutanii subsp. Calyptogena okutanii (strain HA), this protein is Large ribosomal subunit protein uL5.